The primary structure comprises 146 residues: Phospho-2-dehydro-3-deoxyheptonate aldolase (146 aa).

The protein belongs to the class-II DAHP synthase family. Homodimer.

The catalysed reaction is D-erythrose 4-phosphate + phosphoenolpyruvate + H2O = 7-phospho-2-dehydro-3-deoxy-D-arabino-heptonate + phosphate. It participates in metabolic intermediate biosynthesis; chorismate biosynthesis; chorismate from D-erythrose 4-phosphate and phosphoenolpyruvate: step 1/7. This Streptomyces lividans protein is Phospho-2-dehydro-3-deoxyheptonate aldolase.